The sequence spans 412 residues: Gamma-glutamyl phosphate reductase (412 aa).

Belongs to the gamma-glutamyl phosphate reductase family.

It is found in the cytoplasm. The enzyme catalyses L-glutamate 5-semialdehyde + phosphate + NADP(+) = L-glutamyl 5-phosphate + NADPH + H(+). It functions in the pathway amino-acid biosynthesis; L-proline biosynthesis; L-glutamate 5-semialdehyde from L-glutamate: step 2/2. Functionally, catalyzes the NADPH-dependent reduction of L-glutamate 5-phosphate into L-glutamate 5-semialdehyde and phosphate. The product spontaneously undergoes cyclization to form 1-pyrroline-5-carboxylate. This is Gamma-glutamyl phosphate reductase from Streptococcus suis (strain 98HAH33).